The sequence spans 106 residues: Urease subunit beta (106 aa).

Belongs to the urease beta subunit family. Heterotrimer of UreA (gamma), UreB (beta) and UreC (alpha) subunits. Three heterotrimers associate to form the active enzyme.

It is found in the cytoplasm. It carries out the reaction urea + 2 H2O + H(+) = hydrogencarbonate + 2 NH4(+). It participates in nitrogen metabolism; urea degradation; CO(2) and NH(3) from urea (urease route): step 1/1. This is Urease subunit beta from Synechococcus sp. (strain CC9311).